The chain runs to 264 residues: Apolipoprotein A-I (264 aa).

The signal sequence occupies residues 1-18; it reads MKAVVLAVAVLFLTGSQA. 2 consecutive repeat copies span residues 67 to 88 and 89 to 110. Residues 67–264 are 10 X approximate tandem repeats; it reads LNLLENWDTF…DEATQKLNTQ (198 aa). A Methionine sulfoxide modification is found at Met109. The stretch at 111-121 is one 3; half-length repeat; the sequence is KDLEEVKQKVQ. 3 consecutive repeat copies span residues 122 to 143, 144 to 165, and 166 to 187. One copy of the 7; truncated repeat lies at 188–207; sequence PYSDQMRDRLAERLTALRDN. Met193 is modified (methionine sulfoxide). Repeat 8 spans residues 208–229; sequence PKLAEYHARATEHLKKLGEKTK. One copy of the 9; half-length repeat lies at 230–240; the sequence is PTLEDLRQGLM. Residue Met240 is modified to Methionine sulfoxide. Residues 241-264 form repeat 10; sequence PWLESLKAKALSVLDEATQKLNTQ.

The protein belongs to the apolipoprotein A1/A4/E family. As to quaternary structure, homodimer. Interacts with APOA1BP and CLU. Component of a sperm activating protein complex (SPAP), consisting of APOA1, an immunoglobulin heavy chain, an immunoglobulin light chain and albumin. Interacts with NDRG1. Interacts with SCGB3A2. Interacts with NAXE and YJEFN3. Post-translationally, glycosylated. In terms of processing, palmitoylated. Phosphorylation sites are present in the extracellular medium.

The protein localises to the secreted. Functionally, participates in the reverse transport of cholesterol from tissues to the liver for excretion by promoting cholesterol efflux from tissues and by acting as a cofactor for the lecithin cholesterol acyltransferase (LCAT). As part of the SPAP complex, activates spermatozoa motility. The sequence is that of Apolipoprotein A-I (Apoa1) from Nannospalax galili (Northern Israeli blind subterranean mole rat).